The primary structure comprises 364 residues: GDSL esterase/lipase EXL3 (364 aa).

The signal sequence occupies residues 1–32 (MKDNSSWSCSCSWSSWKICLLSVLFLTETITA). Ser-50 (nucleophile) is an active-site residue. Residues Asp-339 and His-342 contribute to the active site.

The protein belongs to the 'GDSL' lipolytic enzyme family. Flower buds.

It is found in the secreted. The polypeptide is GDSL esterase/lipase EXL3 (EXL3) (Arabidopsis thaliana (Mouse-ear cress)).